The chain runs to 367 residues: D-alanine--D-alanine ligase (367 aa).

In terms of domain architecture, ATP-grasp spans 139 to 340 (KLILKEKNIP…FSQVIDNMIS (202 aa)). Position 169–224 (169–224 (KEVLEYPMIVKPARLGSSIGVKKVNDKCELEEAIETAFSFDDKVIVEKWIDSRELN)) interacts with ATP. Positions 298, 311, and 313 each coordinate Mg(2+).

It belongs to the D-alanine--D-alanine ligase family. Mg(2+) is required as a cofactor. Requires Mn(2+) as cofactor.

It is found in the cytoplasm. It carries out the reaction 2 D-alanine + ATP = D-alanyl-D-alanine + ADP + phosphate + H(+). The protein operates within cell wall biogenesis; peptidoglycan biosynthesis. Cell wall formation. The sequence is that of D-alanine--D-alanine ligase from Thermosipho africanus (strain TCF52B).